Reading from the N-terminus, the 305-residue chain is Probable 2-methylisocitrate lyase 1 (305 aa).

Residue 52 to 54 participates in substrate binding; that stretch reads SGA. Positions 91 and 93 each coordinate Mg(2+). Residues 128 to 129, Arg-163, Glu-193, 216 to 218, Arg-247, and Arg-276 contribute to the substrate site; these read CG and NMT.

This sequence belongs to the isocitrate lyase/PEP mutase superfamily. Methylisocitrate lyase family. As to quaternary structure, homotetramer; dimer of dimers. Mg(2+) serves as cofactor.

It carries out the reaction (2S,3R)-3-hydroxybutane-1,2,3-tricarboxylate = pyruvate + succinate. In terms of biological role, catalyzes the thermodynamically favored C-C bond cleavage of (2R,3S)-2-methylisocitrate to yield pyruvate and succinate via an alpha-carboxy-carbanion intermediate. The protein is Probable 2-methylisocitrate lyase 1 of Corynebacterium glutamicum (strain ATCC 13032 / DSM 20300 / JCM 1318 / BCRC 11384 / CCUG 27702 / LMG 3730 / NBRC 12168 / NCIMB 10025 / NRRL B-2784 / 534).